Reading from the N-terminus, the 234-residue chain is Ribonuclease HII (234 aa).

Residues 16–207 form the RNase H type-2 domain; the sequence is ALVAGVDEAG…VRRMLTPKAI (192 aa). Residues aspartate 22, glutamate 23, and aspartate 115 each contribute to the a divalent metal cation site.

It belongs to the RNase HII family. Mn(2+) is required as a cofactor. The cofactor is Mg(2+).

The protein resides in the cytoplasm. It catalyses the reaction Endonucleolytic cleavage to 5'-phosphomonoester.. Endonuclease that specifically degrades the RNA of RNA-DNA hybrids. This is Ribonuclease HII from Xylella fastidiosa (strain M12).